Consider the following 1154-residue polypeptide: Diacylglycerol kinase eta (1154 aa).

A disordered region spans residues 1–54; the sequence is MAGAGYQHHPPGGAAVGTSAVSPTAAGPGEDSSDSEAEQGGPQKLIRKVSTSGQ. The PH domain occupies 59–152; that stretch reads TSIKEGQLLK…WISSLKSVQS (94 aa). 2 consecutive Phorbol-ester/DAG-type zinc fingers follow at residues 169 to 219 and 241 to 292; these read MHNW…TNNC and PHQW…HPVC. Residues 322-457 enclose the DAGKc domain; the sequence is FCVSPLLVFV…LDRWSIMTYE (136 aa). Disordered stretches follow at residues 560–608, 634–678, and 1123–1154; these read QASR…AVKP, DEQT…APEA, and FKME…SPGN. Acidic residues predominate over residues 573 to 586; sequence PEEDAVESSSEESL. The span at 656–667 shows a compositional bias: basic and acidic residues; the sequence is DDSKDNDTKESP. A compositionally biased stretch (polar residues) spans 1131–1154; it reads QKTSSQPGPGDTESGSYEANSPGN.

This sequence belongs to the eukaryotic diacylglycerol kinase family. In terms of assembly, interacts with RAF1 and BRAF. In terms of processing, phosphorylated. Phosphorylation does not inhibit catalytic activity. In terms of tissue distribution, expressed in a wide variety of tissues. Most abundant in the brain and testis; also found in lung, spleen, and prostate (at protein level).

It localises to the cytoplasm. It is found in the cell membrane. It catalyses the reaction a 1,2-diacyl-sn-glycerol + ATP = a 1,2-diacyl-sn-glycero-3-phosphate + ADP + H(+). The enzyme catalyses 1,2-di-(9Z-octadecenoyl)-sn-glycerol + ATP = 1,2-di-(9Z-octadecenoyl)-sn-glycero-3-phosphate + ADP + H(+). It functions in the pathway lipid metabolism; glycerolipid metabolism. Diacylglycerol kinase that converts diacylglycerol/DAG into phosphatidic acid/phosphatidate/PA and regulates the respective levels of these two bioactive lipids. Thereby, acts as a central switch between the signaling pathways activated by these second messengers with different cellular targets and opposite effects in numerous biological processes. Plays a key role in promoting cell growth. Activates the Ras/B-Raf/C-Raf/MEK/ERK signaling pathway induced by EGF. Regulates the recruitment of RAF1 and BRAF from cytoplasm to membranes and their heterodimerization. The polypeptide is Diacylglycerol kinase eta (DGKH) (Mesocricetus auratus (Golden hamster)).